Reading from the N-terminus, the 84-residue chain is Small ribosomal subunit protein uS17 (84 aa).

The protein belongs to the universal ribosomal protein uS17 family. Part of the 30S ribosomal subunit.

In terms of biological role, one of the primary rRNA binding proteins, it binds specifically to the 5'-end of 16S ribosomal RNA. The chain is Small ribosomal subunit protein uS17 from Citrobacter koseri (strain ATCC BAA-895 / CDC 4225-83 / SGSC4696).